The sequence spans 539 residues: Protein peanut (539 aa).

A phosphoserine mark is found at S6 and S13. Positions 29–90 (LRDKQQAASA…GASNGDSNKL (62 aa)) are disordered. Positions 35–54 (AASASASSATNGSSGSESLV) are enriched in low complexity. Residues 139–411 (RGFEFTLMVV…ENYRCRKLSE (273 aa)) form the Septin-type G domain. Positions 149–156 (GASGLGKS) are G1 motif. Residues 149–156 (GASGLGKS), T183, G209, 288–296 (KADTMTPDE), G345, and R360 each bind GTP. The G3 motif stretch occupies residues 206-209 (DTPG). The G4 motif stretch occupies residues 287–290 (AKAD). Residues 420–516 (RLSNKNPLTQ…HVTLEELKRR (97 aa)) are a coiled coil. The tract at residues 513–539 (LKRRSLGANSSTDNVDGKKEKKKKGLF) is disordered. S517 bears the Phosphoserine mark.

The protein belongs to the TRAFAC class TrmE-Era-EngA-EngB-Septin-like GTPase superfamily. Septin GTPase family. As to quaternary structure, likely part of a multicomponent septin complex that includes Septin1. Interacts with Septin1. Interacts with hil. Interacts with park. Ubiquitinated by park, leading to its degradation by the proteasome. As to expression, accumulates at the leading edge of the cleavage furrow in dividing cells and cellularizing embryos (at protein level).

It is found in the apical cell membrane. The protein resides in the cleavage furrow. It localises to the cytoplasm. The protein localises to the cell cortex. Involved in cytokinesis and possibly cellularization. Also acts as an enhancer of the sina gene, thus having a role in photoreceptor development. May be involved in p53-dependent apoptosis. The protein is Protein peanut (pnut) of Drosophila melanogaster (Fruit fly).